A 318-amino-acid chain; its full sequence is Methionyl-tRNA formyltransferase (318 aa).

110–113 is a binding site for (6S)-5,6,7,8-tetrahydrofolate; the sequence is SLLP.

It belongs to the Fmt family.

The catalysed reaction is L-methionyl-tRNA(fMet) + (6R)-10-formyltetrahydrofolate = N-formyl-L-methionyl-tRNA(fMet) + (6S)-5,6,7,8-tetrahydrofolate + H(+). Attaches a formyl group to the free amino group of methionyl-tRNA(fMet). The formyl group appears to play a dual role in the initiator identity of N-formylmethionyl-tRNA by promoting its recognition by IF2 and preventing the misappropriation of this tRNA by the elongation apparatus. This chain is Methionyl-tRNA formyltransferase, found in Geobacillus sp. (strain WCH70).